The primary structure comprises 89 residues: UPF0237 protein CE1668 (89 aa).

The region spanning Ile4–Gln78 is the ACT domain.

The protein belongs to the UPF0237 family.

The protein is UPF0237 protein CE1668 of Corynebacterium efficiens (strain DSM 44549 / YS-314 / AJ 12310 / JCM 11189 / NBRC 100395).